The primary structure comprises 1483 residues: ABC multidrug transporter atrA (1483 aa).

Residues 1–19 are compositionally biased toward basic and acidic residues; sequence MASHKKSEDPLVVKDRQEQ. The tract at residues 1–92 is disordered; sequence MASHKKSEDP…NDPAVDPQGP (92 aa). N-linked (GlcNAc...) asparagine glycosylation is present at asparagine 32. The span at 71–82 shows a compositional bias: polar residues; the sequence is PTRTSTLATISE. Residues asparagine 123 and asparagine 322 are each glycosylated (N-linked (GlcNAc...) asparagine). Residues 147 to 398 form the ABC transporter 1 domain; it reads FRIGEMMKNR…FERQGWECPQ (252 aa). 5 helical membrane passes run 512–532, 539–559, 595–615, 620–640, and 654–674; these read TVSTVISQIIMALIIGSVFYG, GFTAKGATLFFAVLLNALIAM, IPVKFVIAVVFNLILYFLAGL, GQFFLYLLVTFIVMFVMSAVF, and MGLAGILILALIVYTGFVLPV. An N-linked (GlcNAc...) asparagine glycan is attached at asparagine 718. A helical transmembrane segment spans residues 759–779; the sequence is FGILIAFLVGFMMIYFIATEL. An N-linked (GlcNAc...) asparagine glycan is attached at asparagine 780. The ABC transporter 2 domain maps to 840–1083; the sequence is FTWRDVCYDI…LLNYFESNGA (244 aa). 876–883 contacts ATP; it reads GVSGAGKT. Asparagine 947 and asparagine 1146 each carry an N-linked (GlcNAc...) asparagine glycan. 5 helical membrane-spanning segments follow: residues 1179–1199, 1215–1235, 1254–1274, 1293–1313, and 1320–1340; these read YIASKWVLGILSGLFIGFSFF, LFMLCSIFSSLVQQVMPLFVT, AFLIANIIVEIPYQIMMGILT, LVLLLCIQFFIYASTFAHMAI, and ETASAIVVLLFAMSLTFCGVM. Asparagine 1413 is a glycosylation site (N-linked (GlcNAc...) asparagine). A helical membrane pass occupies residues 1444–1464; the sequence is FGLMWVYIVFNIFLATMLYYT. N-linked (GlcNAc...) asparagine glycosylation is present at asparagine 1471.

The protein belongs to the ABC transporter superfamily. ABCG family. PDR (TC 3.A.1.205) subfamily.

The protein localises to the cell membrane. It catalyses the reaction (R)-miconazole(in) + ATP + H2O = (R)-miconazole(out) + ADP + phosphate + H(+). In terms of biological role, pleiotropic ABC efflux transporter involved in the basal level of azole susceptibility. Confers resistance to miconazole and clotrimazole. The sequence is that of ABC multidrug transporter atrA from Aspergillus oryzae (strain ATCC 42149 / RIB 40) (Yellow koji mold).